Consider the following 313-residue polypeptide: Ribonuclease HIII (313 aa).

The RNase H type-2 domain occupies 98–313 (YNCIGSDEAG…REKALKLIKK (216 aa)). A divalent metal cation contacts are provided by D104, E105, and D208.

This sequence belongs to the RNase HII family. RnhC subfamily. Mn(2+) serves as cofactor. Mg(2+) is required as a cofactor.

The protein resides in the cytoplasm. The enzyme catalyses Endonucleolytic cleavage to 5'-phosphomonoester.. Its function is as follows. Endonuclease that specifically degrades the RNA of RNA-DNA hybrids. The chain is Ribonuclease HIII from Macrococcus caseolyticus (strain JCSC5402) (Macrococcoides caseolyticum).